Here is a 225-residue protein sequence, read N- to C-terminus: MEPIKNIPRLCRTLGYEFNEKAFLDQALTHRSASNKHNERLEFLGDSILSIVISDALYHQFPAATEGDLSRMRATLVCGKMLAEIAIEFKLGDYLKLGPGELKSGGFRRESILADAVEAIIGAIYLDSDIENCRQLVLNWYESRLKVIEPINQKDPKTLLQEYLQKYRKPLPVYRVAHTEGDAHEQTFTVECIVEDLSQAVVGVASSRRKAEQSAAAQVLELIKK.

The 123-residue stretch at 7-129 (IPRLCRTLGY…IIGAIYLDSD (123 aa)) folds into the RNase III domain. Residue E42 coordinates Mg(2+). D46 is a catalytic residue. 2 residues coordinate Mg(2+): D115 and E118. E118 is a catalytic residue. A DRBM domain is found at 155–225 (DPKTLLQEYL…AAQVLELIKK (71 aa)).

Belongs to the ribonuclease III family. In terms of assembly, homodimer. Requires Mg(2+) as cofactor.

It is found in the cytoplasm. The catalysed reaction is Endonucleolytic cleavage to 5'-phosphomonoester.. In terms of biological role, digests double-stranded RNA. Involved in the processing of primary rRNA transcript to yield the immediate precursors to the large and small rRNAs (23S and 16S). Processes some mRNAs, and tRNAs when they are encoded in the rRNA operon. Processes pre-crRNA and tracrRNA of type II CRISPR loci if present in the organism. This Shewanella pealeana (strain ATCC 700345 / ANG-SQ1) protein is Ribonuclease 3.